A 207-amino-acid polypeptide reads, in one-letter code: Probable nicotinate-nucleotide adenylyltransferase (207 aa).

This sequence belongs to the NadD family.

It carries out the reaction nicotinate beta-D-ribonucleotide + ATP + H(+) = deamido-NAD(+) + diphosphate. It functions in the pathway cofactor biosynthesis; NAD(+) biosynthesis; deamido-NAD(+) from nicotinate D-ribonucleotide: step 1/1. In terms of biological role, catalyzes the reversible adenylation of nicotinate mononucleotide (NaMN) to nicotinic acid adenine dinucleotide (NaAD). The chain is Probable nicotinate-nucleotide adenylyltransferase from Desulfitobacterium hafniense (strain Y51).